Reading from the N-terminus, the 205-residue chain is HTH-type transcriptional regulator PksA (205 aa).

An HTH tetR-type domain is found at 8-68; the sequence is EKRRKQIAEA…FAMKLVQEKV (61 aa). The H-T-H motif DNA-binding region spans 31–50; the sequence is SARNIAKEAGLSLGALRHYF.

Transcriptional regulation of the polyketide synthase operon. The protein is HTH-type transcriptional regulator PksA (pksA) of Bacillus subtilis (strain 168).